A 241-amino-acid polypeptide reads, in one-letter code: ATP synthase subunit a (241 aa).

5 consecutive transmembrane segments (helical) span residues 30–50, 91–111, 128–148, 193–213, and 214–234; these read GQVFLTSWILLGALLVFISLG, FIGTLFLFVFVSNWGGALIPW, INTTIALALLVSLSYFYAGLS, LVVGVLVFLVPLILPIPVMFL, and GLFTSAIQALIFATLAAYYIG.

Belongs to the ATPase A chain family. As to quaternary structure, F-type ATPases have 2 components, CF(1) - the catalytic core - and CF(0) - the membrane proton channel. CF(1) has five subunits: alpha(3), beta(3), gamma(1), delta(1), epsilon(1). CF(0) has four main subunits: a, b, b' and c.

Its subcellular location is the cellular thylakoid membrane. Its function is as follows. Key component of the proton channel; it plays a direct role in the translocation of protons across the membrane. This Prochlorococcus marinus (strain MIT 9312) protein is ATP synthase subunit a.